The primary structure comprises 266 residues: Hydroxyacylglutathione hydrolase (266 aa).

His-53, His-55, Asp-57, His-58, His-118, Asp-140, and His-178 together coordinate Zn(2+).

The protein belongs to the metallo-beta-lactamase superfamily. Glyoxalase II family. In terms of assembly, monomer. It depends on Zn(2+) as a cofactor.

It catalyses the reaction an S-(2-hydroxyacyl)glutathione + H2O = a 2-hydroxy carboxylate + glutathione + H(+). The protein operates within secondary metabolite metabolism; methylglyoxal degradation; (R)-lactate from methylglyoxal: step 2/2. Functionally, thiolesterase that catalyzes the hydrolysis of S-D-lactoyl-glutathione to form glutathione and D-lactic acid. The sequence is that of Hydroxyacylglutathione hydrolase from Cupriavidus metallidurans (strain ATCC 43123 / DSM 2839 / NBRC 102507 / CH34) (Ralstonia metallidurans).